Consider the following 172-residue polypeptide: Female-specific lacrimal gland protein (172 aa).

The first 16 residues, 1–16 (MVKFLLLALALGVSCA), serve as a signal peptide directing secretion. 2 disulfide bridges follow: Cys60/Cys64 and Cys79/Cys170.

This sequence belongs to the calycin superfamily. Lipocalin family. In terms of tissue distribution, expressed in the lacrimal gland from where it is secreted into tears (at protein level).

It is found in the secreted. This is Female-specific lacrimal gland protein from Mesocricetus auratus (Golden hamster).